The following is a 132-amino-acid chain: D-ribose pyranase (132 aa).

Catalysis depends on H20, which acts as the Proton donor. Residues D28, H99, and 121–123 (YSN) each bind substrate.

The protein belongs to the RbsD / FucU family. RbsD subfamily. In terms of assembly, homodecamer.

The protein resides in the cytoplasm. The enzyme catalyses beta-D-ribopyranose = beta-D-ribofuranose. The protein operates within carbohydrate metabolism; D-ribose degradation; D-ribose 5-phosphate from beta-D-ribopyranose: step 1/2. Catalyzes the interconversion of beta-pyran and beta-furan forms of D-ribose. This chain is D-ribose pyranase, found in Pseudomonas putida (strain W619).